We begin with the raw amino-acid sequence, 342 residues long: Heat-inducible transcription repressor HrcA (342 aa).

Belongs to the HrcA family.

Its function is as follows. Negative regulator of class I heat shock genes (grpE-dnaK-dnaJ and groELS operons). Prevents heat-shock induction of these operons. This is Heat-inducible transcription repressor HrcA from Geobacter sulfurreducens (strain ATCC 51573 / DSM 12127 / PCA).